A 518-amino-acid polypeptide reads, in one-letter code: D-aminopeptidase (518 aa).

Ser62 (nucleophile) is an active-site residue. The Proton donor/acceptor role is filled by Lys65. The important for specificity stretch occupies residues 477 to 487 (QRSMDAPSPGE). Residue Asp481 participates in substrate binding.

It belongs to the peptidase S12 family. Homodimer.

The enzyme catalyses Release of an N-terminal D-amino acid from a peptide, Xaa-|-Yaa-, in which Xaa is preferably D-Ala, D-Ser or D-Thr. D-amino acid amides and methyl esters also are hydrolyzed, as is glycine amide.. Its activity is regulated as follows. Inhibited by beta-lactam compounds such as 6-aminopenicillic acid, 7-aminocephalosporanic acid, benzylpenicillin and ampicillin. Inhibited by p-chloromercuribenzoate. Functionally, hydrolyzes N-terminal residues in D-amino acid-containing peptides. This chain is D-aminopeptidase, found in Brucella ovis (strain ATCC 25840 / 63/290 / NCTC 10512).